The chain runs to 324 residues: MSWLTPELTEILITVGKAIVILLVVVTCGAFMSMGERRLLGLFQGRYGPNRVGWGGSLQLVADMIKMFFKEDWVPNFTDKVIFTLAPMIAFTSMLIAFAIVPITPTWGVADLNIGILFFLMMAGLAVYAVLFAGWASNNKYSLLGAVRASAQTVSYEVFIGLSLMGVVAQAGSFNMRDIVDSQEHLWNVIPQFFGFITFAIAGVAVCHRHPFDQPEAEQEIADGYHIEYSGMKFGLFFVGEYIGIVTVSALMVTLFFGGWHGPILPPFVWFALKTGFFMMMFILIRASLPRPRYDQVMSFGWKVCLPITLLNLLATAAVILYNA.

8 helical membrane-spanning segments follow: residues 11-31 (ILIT…CGAF), 81-101 (VIFT…FAIV), 114-134 (IGIL…LFAG), 154-174 (VSYE…AGSF), 186-206 (LWNV…GVAV), 237-257 (FFVG…TLFF), 264-284 (ILPP…MFIL), and 304-324 (VCLP…LYNA).

This sequence belongs to the complex I subunit 1 family. NDH-1 is composed of 13 different subunits. Subunits NuoA, H, J, K, L, M, N constitute the membrane sector of the complex.

It localises to the cell inner membrane. The enzyme catalyses a quinone + NADH + 5 H(+)(in) = a quinol + NAD(+) + 4 H(+)(out). Its function is as follows. NDH-1 shuttles electrons from NADH, via FMN and iron-sulfur (Fe-S) centers, to quinones in the respiratory chain. The immediate electron acceptor for the enzyme in this species is believed to be ubiquinone. Couples the redox reaction to proton translocation (for every two electrons transferred, four hydrogen ions are translocated across the cytoplasmic membrane), and thus conserves the redox energy in a proton gradient. This subunit may bind ubiquinone. This Pectobacterium carotovorum subsp. carotovorum (strain PC1) protein is NADH-quinone oxidoreductase subunit H.